The sequence spans 396 residues: Na(+)/H(+) antiporter NhaA (396 aa).

Transmembrane regions (helical) follow at residues 16–36, 59–79, 95–115, 124–144, 154–174, 178–198, 213–233, 254–274, 278–298, 328–348, and 363–383; these read GIILIMAAMLAMILANSGLAG, LLLWINDGFMAVFFLLVGLEV, TFPAIAAVGGMLAPALIYAFF, AGWAIPAATDIAFALGVMALL, VFLLALAIMDDLGVIIIIALF, QLSLTALAIGILATLTLLWMN, LVLWVAVLKSGVHATLAGVIV, ALHPWSAYLILPLFAFANAGV, GIGLSALLSPVPLGIMLGLFI, IFAVSILCGIGFTMSMFIASL, and LGILVGSTLAAIVGYLALRIA.

This sequence belongs to the NhaA Na(+)/H(+) (TC 2.A.33) antiporter family.

The protein resides in the cell inner membrane. It carries out the reaction Na(+)(in) + 2 H(+)(out) = Na(+)(out) + 2 H(+)(in). Its function is as follows. Na(+)/H(+) antiporter that extrudes sodium in exchange for external protons. This is Na(+)/H(+) antiporter NhaA from Aeromonas hydrophila subsp. hydrophila (strain ATCC 7966 / DSM 30187 / BCRC 13018 / CCUG 14551 / JCM 1027 / KCTC 2358 / NCIMB 9240 / NCTC 8049).